The sequence spans 529 residues: ATP synthase subunit alpha (529 aa).

173 to 180 (GDRQTGKT) provides a ligand contact to ATP.

Belongs to the ATPase alpha/beta chains family. In terms of assembly, F-type ATPases have 2 components, CF(1) - the catalytic core - and CF(0) - the membrane proton channel. CF(1) has five subunits: alpha(3), beta(3), gamma(1), delta(1), epsilon(1). CF(0) has three main subunits: a(1), b(2) and c(9-12). The alpha and beta chains form an alternating ring which encloses part of the gamma chain. CF(1) is attached to CF(0) by a central stalk formed by the gamma and epsilon chains, while a peripheral stalk is formed by the delta and b chains.

The protein localises to the cell membrane. The enzyme catalyses ATP + H2O + 4 H(+)(in) = ADP + phosphate + 5 H(+)(out). Its function is as follows. Produces ATP from ADP in the presence of a proton gradient across the membrane. The alpha chain is a regulatory subunit. The chain is ATP synthase subunit alpha from Streptomyces avermitilis (strain ATCC 31267 / DSM 46492 / JCM 5070 / NBRC 14893 / NCIMB 12804 / NRRL 8165 / MA-4680).